A 278-amino-acid polypeptide reads, in one-letter code: Small ribosomal subunit protein uS2 (278 aa).

Positions 233–258 (IDMEAAGEAPANKGKKKSAKARLDKS) are disordered.

Belongs to the universal ribosomal protein uS2 family.

This chain is Small ribosomal subunit protein uS2, found in Bacteroides fragilis (strain ATCC 25285 / DSM 2151 / CCUG 4856 / JCM 11019 / LMG 10263 / NCTC 9343 / Onslow / VPI 2553 / EN-2).